The following is a 548-amino-acid chain: Glucan 1,4-alpha-maltotetraohydrolase (548 aa).

The first 21 residues, 1 to 21, serve as a signal peptide directing secretion; sequence MSHILRAAVLAAMLLPLPSMA. Residues Asp22, Gln23, His34, Asp37, and Glu38 each coordinate Ca(2+). Substrate is bound at residue 99–100; the sequence is YF. Asn137 lines the Ca(2+) pocket. A substrate-binding site is contributed by His138. Cys161 and Cys171 are joined by a disulfide. Asp172 and Asp175 together coordinate Ca(2+). 177-181 contributes to the substrate binding site; it reads FIGGD. Position 183 (Asp183) interacts with Ca(2+). Arg212 contributes to the substrate binding site. Asp214 (nucleophile) is an active-site residue. 217 to 218 contacts substrate; the sequence is RG. Gly218 provides a ligand contact to Ca(2+). Cys237 and Cys272 form a disulfide bridge. Glu240 functions as the Proton donor in the catalytic mechanism. Substrate-binding residues include His314 and Gln326. A CBM20 domain is found at 446–548; the sequence is GEPGALVSVS…SEGATTVGRL (103 aa). The span at 529 to 542 shows a compositional bias: polar residues; that stretch reads QGGANNSLTPSEGA. The segment at 529 to 548 is disordered; it reads QGGANNSLTPSEGATTVGRL.

It belongs to the glycosyl hydrolase 13 family. In terms of assembly, monomer. Ca(2+) is required as a cofactor.

It is found in the secreted. It carries out the reaction Hydrolysis of (1-&gt;4)-alpha-D-glucosidic linkages in amylaceous polysaccharides, to remove successive maltotetraose residues from the non-reducing chain ends.. Its pathway is glycan degradation; starch degradation. The chain is Glucan 1,4-alpha-maltotetraohydrolase (amyP) from Stutzerimonas stutzeri (Pseudomonas stutzeri).